A 523-amino-acid chain; its full sequence is SWI/SNF and RSC complexes subunit arp9 (523 aa).

Residues 56–72 (INMEDPNVKTDETKVET) show a composition bias toward basic and acidic residues. Disordered stretches follow at residues 56–92 (INME…KNMG) and 319–339 (QKER…NTDV). Over residues 79 to 92 (QPSNSNVTEEKNMG) the composition is skewed to polar residues. Basic and acidic residues predominate over residues 319-336 (QKEREKNGESEKDEKPDN).

Belongs to the actin family. In terms of assembly, component of the RSC complex composed of at least arp9, arp42, rsc1, rsc4, rsc7, rsc9, rsc58, sfh1, snf21, ssr1, ssr2, ssr3 and ssr4. The complex interacts with histone and histone variant components of centromeric chromatin. Component of the SWI/SNF global transcription activator complex composed of at least arp9, arp42, snf5, snf22, snf30, sbf59, sol1, ssr1, ssr2, ssr3, ssr4 and tfg3.

The protein localises to the cytoplasm. It is found in the nucleus. Component of the chromatin structure remodeling complex (RSC), which is involved in transcription regulation and nucleosome positioning. Controls particularly membrane and organelle development genes. Part of the SWI/SNF complex, an ATP-dependent chromatin remodeling complex, required for the positive and negative regulation of gene expression of a large number of genes. It changes chromatin structure by altering DNA-histone contacts within a nucleosome, leading eventually to a change in nucleosome position, thus facilitating or repressing binding of gene-specific transcription factors. The protein is SWI/SNF and RSC complexes subunit arp9 (arp9) of Schizosaccharomyces pombe (strain 972 / ATCC 24843) (Fission yeast).